A 319-amino-acid polypeptide reads, in one-letter code: Insulin gene enhancer protein ISL-2 (319 aa).

LIM zinc-binding domains are found at residues 1 to 43 and 52 to 106; these read FLLR…CKRD and CAQC…RADH. Disordered stretches follow at residues 106 to 151, 218 to 237, and 286 to 319; these read HGPP…EKTT, QQHS…LVAG, and ESGS…PAET. A DNA-binding region (homeobox) is located at residues 150-209; it reads TTRVRTVLNEKQLHTLRTCYAANPRPDALMKEQLVEMTGLSPRVIRVWFQNKRCKDKKKS. Residues 218–230 show a composition bias toward polar residues; the sequence is QQHSDKTSLQGLT. The span at 286 to 303 shows a compositional bias: low complexity; it reads ESGSLGTSSGSDVTSLSS. The segment covering 304–319 has biased composition (polar residues); the sequence is QLPDTPNSMVPSPAET.

The protein localises to the nucleus. Transcriptional factor that defines subclasses of motoneurons that segregate into columns in the spinal cord and select distinct axon pathways. Acts in conjunction with LIM-1, LIM-3 and ISL-1. The sequence is that of Insulin gene enhancer protein ISL-2 (ISL2) from Gallus gallus (Chicken).